Consider the following 611-residue polypeptide: V-type proton ATPase catalytic subunit A (611 aa).

244–251 contributes to the ATP binding site; the sequence is GAFGCGKT.

This sequence belongs to the ATPase alpha/beta chains family. As to quaternary structure, V-ATPase is a heteromultimeric enzyme made up of two complexes: the ATP-hydrolytic V1 complex and the proton translocation V0 complex. The V1 complex consists of three catalytic AB heterodimers that form a heterohexamer, three peripheral stalks each consisting of EG heterodimers, one central rotor including subunits D and F, and the regulatory subunits C and H. The proton translocation complex V0 consists of the proton transport subunit a, a ring of proteolipid subunits c9c'', rotary subunit d and subunit e.

The protein resides in the cell membrane. Its subcellular location is the vacuole. It localises to the vesicle. The enzyme catalyses ATP + H2O + 4 H(+)(in) = ADP + phosphate + 5 H(+)(out). Its activity is regulated as follows. ATP hydrolysis occurs at the interface between the nucleotide-binding domains of subunits A and B. ATP hydrolysis triggers a conformational change in the subunits D and F, which induces a shift of subunit d. The c-ring is subsequently rotated and results in a continuous proton translocation across the membrane. In terms of biological role, catalytic subunit of the V1 complex of vacuolar(H+)-ATPase (V-ATPase), a multisubunit enzyme composed of a peripheral complex (V1) that hydrolyzes ATP and a membrane integral complex (V0) that translocates protons. V-ATPase is responsible for acidifying and maintaining the pH of intracellular compartments and in some cell types, is targeted to the plasma membrane, where it is responsible for acidifying the extracellular environment. During the trophozoite stage, involved in the acidification of the extracellular space next to the cell membrane. The polypeptide is V-type proton ATPase catalytic subunit A (Plasmodium falciparum (isolate 3D7)).